The sequence spans 384 residues: Histidinol-phosphate aminotransferase (384 aa).

Lys-223 carries the post-translational modification N6-(pyridoxal phosphate)lysine.

Belongs to the class-II pyridoxal-phosphate-dependent aminotransferase family. Requires pyridoxal 5'-phosphate as cofactor.

It carries out the reaction L-histidinol phosphate + 2-oxoglutarate = 3-(imidazol-4-yl)-2-oxopropyl phosphate + L-glutamate. The protein operates within amino-acid biosynthesis; L-histidine biosynthesis; L-histidine from 5-phospho-alpha-D-ribose 1-diphosphate: step 7/9. This chain is Histidinol-phosphate aminotransferase (his3), found in Schizosaccharomyces pombe (strain 972 / ATCC 24843) (Fission yeast).